The chain runs to 336 residues: DNA-directed RNA polymerase subunit alpha (336 aa).

The interval 1–232 (MIQKNWQELI…DQLGVFVNFD (232 aa)) is alpha N-terminal domain (alpha-NTD). The tract at residues 248–336 (FNPALLKKVD…DLAKRYEDQY (89 aa)) is alpha C-terminal domain (alpha-CTD).

This sequence belongs to the RNA polymerase alpha chain family. In terms of assembly, homodimer. The RNAP catalytic core consists of 2 alpha, 1 beta, 1 beta' and 1 omega subunit. When a sigma factor is associated with the core the holoenzyme is formed, which can initiate transcription.

The enzyme catalyses RNA(n) + a ribonucleoside 5'-triphosphate = RNA(n+1) + diphosphate. Functionally, DNA-dependent RNA polymerase catalyzes the transcription of DNA into RNA using the four ribonucleoside triphosphates as substrates. The protein is DNA-directed RNA polymerase subunit alpha of Rhizobium radiobacter (Agrobacterium tumefaciens).